We begin with the raw amino-acid sequence, 348 residues long: Heat-inducible transcription repressor HrcA (348 aa).

This sequence belongs to the HrcA family.

Functionally, negative regulator of class I heat shock genes (grpE-dnaK-dnaJ and groELS operons). Prevents heat-shock induction of these operons. The polypeptide is Heat-inducible transcription repressor HrcA (Thermodesulfovibrio yellowstonii (strain ATCC 51303 / DSM 11347 / YP87)).